A 179-amino-acid chain; its full sequence is uncharacterized protein (179 aa).

The Rhodanese domain maps to 21–109 (QQDAVILVDV…WKQAGLPTVK (89 aa)). 2 helical membrane-spanning segments follow: residues 115–135 (ISIMRQVQIIAGSLVLTGVLL) and 138–158 (FVAPGFYFLSGFVGAGLLFAG).

It is found in the cell membrane. This is an uncharacterized protein from Synechocystis sp. (strain ATCC 27184 / PCC 6803 / Kazusa).